The sequence spans 346 residues: NADP-dependent alcohol dehydrogenase C (346 aa).

Zn(2+)-binding residues include Cys41, His63, Cys94, Cys97, Cys100, Cys108, and Cys158.

The protein belongs to the zinc-containing alcohol dehydrogenase family. Requires Zn(2+) as cofactor.

It carries out the reaction a primary alcohol + NADP(+) = an aldehyde + NADPH + H(+). The sequence is that of NADP-dependent alcohol dehydrogenase C (adhC) from Mycobacterium bovis (strain ATCC BAA-935 / AF2122/97).